The sequence spans 137 residues: Cytochrome c2 (137 aa).

The first 21 residues, 1–21 (MKISLTAATVAALVLAAPAFA), serve as a signal peptide directing secretion. Cys-34, Cys-37, His-38, and Met-117 together coordinate heme c.

This sequence belongs to the cytochrome c family. In terms of processing, binds 1 heme c group covalently per subunit.

Its function is as follows. Cytochrome c2 is found mainly in purple, non-sulfur, photosynthetic bacteria where it functions as the electron donor to the oxidized bacteriochlorophyll in the photophosphorylation pathway. However, it may also have a role in the respiratory chain and is found in some non-photosynthetic bacteria. This chain is Cytochrome c2 (cycA), found in Rhodobacter capsulatus (strain ATCC BAA-309 / NBRC 16581 / SB1003).